A 238-amino-acid chain; its full sequence is Ribonuclease PH (238 aa).

Residues R86 and 124–126 (GTR) contribute to the phosphate site.

The protein belongs to the RNase PH family. Homohexameric ring arranged as a trimer of dimers.

The catalysed reaction is tRNA(n+1) + phosphate = tRNA(n) + a ribonucleoside 5'-diphosphate. Functionally, phosphorolytic 3'-5' exoribonuclease that plays an important role in tRNA 3'-end maturation. Removes nucleotide residues following the 3'-CCA terminus of tRNAs; can also add nucleotides to the ends of RNA molecules by using nucleoside diphosphates as substrates, but this may not be physiologically important. Probably plays a role in initiation of 16S rRNA degradation (leading to ribosome degradation) during starvation. The chain is Ribonuclease PH from Mannheimia haemolytica (Pasteurella haemolytica).